The chain runs to 149 residues: uncharacterized protein (149 aa).

This is an uncharacterized protein from Caenorhabditis elegans.